Here is a 469-residue protein sequence, read N- to C-terminus: ATP synthase subunit beta (469 aa).

Position 156 to 163 (156 to 163) interacts with ATP; that stretch reads GGAGVGKT.

The protein belongs to the ATPase alpha/beta chains family. As to quaternary structure, F-type ATPases have 2 components, CF(1) - the catalytic core - and CF(0) - the membrane proton channel. CF(1) has five subunits: alpha(3), beta(3), gamma(1), delta(1), epsilon(1). CF(0) has three main subunits: a(1), b(2) and c(9-12). The alpha and beta chains form an alternating ring which encloses part of the gamma chain. CF(1) is attached to CF(0) by a central stalk formed by the gamma and epsilon chains, while a peripheral stalk is formed by the delta and b chains.

The protein resides in the cell membrane. The enzyme catalyses ATP + H2O + 4 H(+)(in) = ADP + phosphate + 5 H(+)(out). In terms of biological role, produces ATP from ADP in the presence of a proton gradient across the membrane. The catalytic sites are hosted primarily by the beta subunits. The chain is ATP synthase subunit beta from Lactococcus lactis subsp. lactis (strain IL1403) (Streptococcus lactis).